Consider the following 490-residue polypeptide: MEVKDIDNYCDRGISPNASNYLTYPFDGLCLQKFFYQLQTSLRRFTPYEEIIYTTVYIIISVAAVIGNGLVIMAVVRKKTMRTNRNVLILNLALSNLILAITNIPFLWLPSIDFEFPYSRFFCKFANVLPGSNIYCSTLTISVMAIDRYYSVKKLKIASNRKQCFHAVLVSLAIWIVSFILSLPLLLYYETSMLYVMREIRVVDQSGQEVIRSYGWRQCRLVSAGRLPDITQSIQLLMSILQVAFLYIVPLFVLSIFNVKLTRFLKTNANKMSKTRAPPKRFDRSDSHHNSLKNNNNHTSSLRSPSMPSIRSSITERNKTNQRTNRTTSLLIAMAGSYAALWFPFTLITFLIDFELIINQDYVNLVERIDQTCKMVSMLSICVNPFLYGFLNTNFRHEFSDIYYRYIRCETKSQPAGRFHHDVSSIAHHRQDSVYNDEATLLTTGRQSNGKDGSSSPIGFRSSVRVCSGQTKMIGDRIVLDDDIEKDSFV.

Residues 1 to 55 are Extracellular-facing; it reads MEVKDIDNYCDRGISPNASNYLTYPFDGLCLQKFFYQLQTSLRRFTPYEEIIYTT. Asn17 carries an N-linked (GlcNAc...) asparagine glycan. The helical transmembrane segment at 56-76 threads the bilayer; that stretch reads VYIIISVAAVIGNGLVIMAVV. At 77 to 86 the chain is on the cytoplasmic side; the sequence is RKKTMRTNRN. The chain crosses the membrane as a helical span at residues 87–107; sequence VLILNLALSNLILAITNIPFL. Over 108-125 the chain is Extracellular; it reads WLPSIDFEFPYSRFFCKF. The helical transmembrane segment at 126–146 threads the bilayer; it reads ANVLPGSNIYCSTLTISVMAI. At 147-166 the chain is on the cytoplasmic side; it reads DRYYSVKKLKIASNRKQCFH. A helical transmembrane segment spans residues 167–187; that stretch reads AVLVSLAIWIVSFILSLPLLL. Over 188 to 236 the chain is Extracellular; the sequence is YYETSMLYVMREIRVVDQSGQEVIRSYGWRQCRLVSAGRLPDITQSIQL. The helical transmembrane segment at 237–257 threads the bilayer; it reads LMSILQVAFLYIVPLFVLSIF. The Cytoplasmic portion of the chain corresponds to 258-331; it reads NVKLTRFLKT…QRTNRTTSLL (74 aa). The tract at residues 272 to 322 is disordered; the sequence is MSKTRAPPKRFDRSDSHHNSLKNNNNHTSSLRSPSMPSIRSSITERNKTNQ. Positions 280–289 are enriched in basic and acidic residues; the sequence is KRFDRSDSHH. Positions 292–313 are enriched in low complexity; that stretch reads LKNNNNHTSSLRSPSMPSIRSS. A helical transmembrane segment spans residues 332–352; that stretch reads IAMAGSYAALWFPFTLITFLI. Residues 353 to 374 lie on the Extracellular side of the membrane; sequence DFELIINQDYVNLVERIDQTCK. A helical membrane pass occupies residues 375–395; it reads MVSMLSICVNPFLYGFLNTNF. At 396 to 490 the chain is on the cytoplasmic side; sequence RHEFSDIYYR…DDDIEKDSFV (95 aa).

It belongs to the G-protein coupled receptor 1 family.

The protein localises to the cell membrane. Its function is as follows. Not known. Putative receptor. The sequence is that of Probable G-protein coupled receptor npr-8 from Caenorhabditis elegans.